A 251-amino-acid polypeptide reads, in one-letter code: Protein PBMUCL2 (251 aa).

The signal sequence occupies residues 1 to 22 (MPRYVPLLLLLLLLRCSERGGG). 2 disordered regions span residues 36–55 (WRDG…DRAS) and 65–251 (LSQS…THLL). The span at 72-87 (KHPETSPKDSRIREND) shows a compositional bias: basic and acidic residues. Asn-120 is a glycosylation site (N-linked (GlcNAc...) asparagine). Polar residues predominate over residues 150–164 (TKDSVTADPGTTENF). The 15 X 11 AA approximate repeats stretch occupies residues 153–251 (SVTADPGTTE…TTKHGDTHLL (99 aa)). Residues 241–251 (ETTKHGDTHLL) show a composition bias toward basic and acidic residues.

In terms of tissue distribution, detected in the brain, lung, spleen, thymus and prostate.

The protein resides in the secreted. This is Protein PBMUCL2 (HCG22) from Homo sapiens (Human).